The sequence spans 258 residues: MSSLLTKTRMLNKILQKSGTEPVAFQDICTLLSEVLECNVYIISKKGKVLGYTFGKDFECEAMKKKVIEDKKFPEDYNKTLLEVNETLSNLPNEGRCVFQEIGKCKKVDKLSTIVPIIGSRERLGTLILARFGNPFTDEDLVIVEYSATIVGMEMLRAMQDEITEDTRKKAVVQLAIGTLSYSELEAVEHIFDELNGNEGLLVASKIADKVGITRSVIVNALRKFESAGVIESRSLGMKGTYIRILNEKLIDELKKIK.

The interval 1–156 is GAF domain; sequence MSSLLTKTRM…SATIVGMEML (156 aa). A DNA-binding region (H-T-H motif) is located at residues 204 to 223; it reads ASKIADKVGITRSVIVNALR.

It belongs to the CodY family.

Its subcellular location is the cytoplasm. In terms of biological role, DNA-binding global transcriptional regulator which is involved in the adaptive response to starvation and acts by directly or indirectly controlling the expression of numerous genes in response to nutrient availability. During rapid exponential growth, CodY is highly active and represses genes whose products allow adaptation to nutrient depletion. This chain is Global transcriptional regulator CodY, found in Clostridium beijerinckii (strain ATCC 51743 / NCIMB 8052) (Clostridium acetobutylicum).